We begin with the raw amino-acid sequence, 149 residues long: Myoglobin (149 aa).

The residue at position 2 (alanine 2) is an N-acetylalanine. Positions 2-143 (ADWDKVNSVW…ICSDIEKEYK (142 aa)) constitute a Globin domain. Histidine 89 serves as a coordination point for heme b.

This sequence belongs to the globin family. In terms of assembly, monomeric.

The protein resides in the cytoplasm. Its subcellular location is the sarcoplasm. It carries out the reaction Fe(III)-heme b-[protein] + nitric oxide + H2O = Fe(II)-heme b-[protein] + nitrite + 2 H(+). The catalysed reaction is H2O2 + AH2 = A + 2 H2O. In terms of biological role, monomeric heme protein which primary function is to store oxygen and facilitate its diffusion within muscle tissues. Reversibly binds oxygen through a pentacoordinated heme iron and enables its timely and efficient release as needed during periods of heightened demand. Depending on the oxidative conditions of tissues and cells, and in addition to its ability to bind oxygen, it also has a nitrite reductase activity whereby it regulates the production of bioactive nitric oxide. Under stress conditions, like hypoxia and anoxia, it also protects cells against reactive oxygen species thanks to its pseudoperoxidase activity. The sequence is that of Myoglobin (mb) from Galeorhinus galeus (Tope shark).